A 354-amino-acid chain; its full sequence is MDYRSAGVDIDLGQAFVRGIRERVERIQVPSSGSSETLGGIGGFAGLFELPTGYQAPVLVAGTDGVGTKLDIAQQWGQHQGVGVDLVAMCANDVLTVGARPLFFLDYVATGKLEPEALWQVIDGILAGCQEAGCQLLGGETAEMPGFYPPGKYDLAGFCIGIVEKTAILDGSRVQLGDRLLALPSSGLHSNGYSLVRRIVADRGWRWDHRPPGWDRPLAEVFLTPTRIYVQAVQRLQAAGIAIHGMAHITGGGIPENLPRCLAPNQAARLQPHSWPIPQEFLWLQEQGQVETLEMFRTFNLGVGYVLVIPPEAENQVRSLLPEAFPIGEVVAACPGESRVLGLEQWGSLTSPAD.

This sequence belongs to the AIR synthase family.

It is found in the cytoplasm. The enzyme catalyses 2-formamido-N(1)-(5-O-phospho-beta-D-ribosyl)acetamidine + ATP = 5-amino-1-(5-phospho-beta-D-ribosyl)imidazole + ADP + phosphate + H(+). It functions in the pathway purine metabolism; IMP biosynthesis via de novo pathway; 5-amino-1-(5-phospho-D-ribosyl)imidazole from N(2)-formyl-N(1)-(5-phospho-D-ribosyl)glycinamide: step 2/2. The polypeptide is Phosphoribosylformylglycinamidine cyclo-ligase (Synechococcus sp. (strain JA-2-3B'a(2-13)) (Cyanobacteria bacterium Yellowstone B-Prime)).